A 49-amino-acid polypeptide reads, in one-letter code: MWAGILEILSAFIRILFKLLYCWALFFTVLKGFSRGPLLPLIYLINKSL.

Residues 5–27 traverse the membrane as a helical segment; that stretch reads ILEILSAFIRILFKLLYCWALFF.

The protein resides in the membrane. This is an uncharacterized protein from Saccharomyces cerevisiae (strain ATCC 204508 / S288c) (Baker's yeast).